The chain runs to 659 residues: Alpha-amylase (659 aa).

Residues 1-27 (MFAKRFKTSLLPLFAGFLLLFHLVLAG) form the signal peptide. Residues 28–41 (PAAASAETANKSNE) constitute a propeptide that is removed on maturation. The Ca(2+) site is built by asparagine 142, threonine 178, aspartate 187, glycine 210, and aspartate 212. The Nucleophile role is filled by aspartate 217. Histidine 221 is a Ca(2+) binding site. Glutamate 249 serves as the catalytic Proton donor.

The protein belongs to the glycosyl hydrolase 13 family. In terms of assembly, monomer. Ca(2+) is required as a cofactor.

It is found in the secreted. The catalysed reaction is Endohydrolysis of (1-&gt;4)-alpha-D-glucosidic linkages in polysaccharides containing three or more (1-&gt;4)-alpha-linked D-glucose units.. The polypeptide is Alpha-amylase (amyE) (Bacillus subtilis (strain 168)).